The primary structure comprises 519 residues: MNLPNLSLADFLPLLPAIIMVVGASILLLSEVFLSTTASRAYQAVLTVVTAVAAGAMALTTMFEPPQEVMLGFGVMDPFSSFLTFVVCVGLGLATLSSVSFLRKRGAERGEFYALMLFASAGMSLLAMSNELITLFVNIEVLSLSTYALTSYLRRGTRPSEAGFKYFILGAFSSAVLLYGAALLYGATGTTHLTAMAGPLSTAMSSQPGLVYAGIILVITGFAFKVAAVPFHMWTPDVYEGAPTPVTALMSVGVKAAAFAAMVRVFFMVGKGVDPQMLLGLFSVLAFLTMVAGNLLAIPQRNVKRMLAYSSIAHAGYLLVGVAALFVTGPGEQFRLLGASALTGGTPLGLARAEALRGILYYLLAYTFSAVGAFAIVSVLERREDEEKGTAWDLERFSGLAQRKPGWAFAMAAFMLSLGGIPPTIGFMSKLLIFQAAVDAGLIGLTIVGVLSSAVGIYYYLRVVVYMFMRPVPEGAQALEKSWSTELALVLSTAAVVILGIIPGPIMGWLEQASSIFGQ.

The next 13 helical transmembrane spans lie at 14-34 (LLPAIIMVVGASILLLSEVFL), 44-64 (AVLTVVTAVAAGAMALTTMFE), 82-102 (FLTFVVCVGLGLATLSSVSFL), 117-137 (LFASAGMSLLAMSNELITLFV), 167-187 (FILGAFSSAVLLYGAALLYGA), 209-229 (GLVYAGIILVITGFAFKVAAV), 249-269 (LMSVGVKAAAFAAMVRVFFMV), 278-298 (LLGLFSVLAFLTMVAGNLLAI), 307-327 (LAYSSIAHAGYLLVGVAALFV), 359-379 (ILYYLLAYTFSAVGAFAIVSV), 407-427 (WAFAMAAFMLSLGGIPPTIGF), 431-451 (LLIFQAAVDAGLIGLTIVGVL), and 487-507 (LALVLSTAAVVILGIIPGPIM).

Belongs to the complex I subunit 2 family. NDH-1 is composed of 14 different subunits. Subunits NuoA, H, J, K, L, M, N constitute the membrane sector of the complex.

The protein resides in the cell inner membrane. It catalyses the reaction a quinone + NADH + 5 H(+)(in) = a quinol + NAD(+) + 4 H(+)(out). In terms of biological role, NDH-1 shuttles electrons from NADH, via FMN and iron-sulfur (Fe-S) centers, to quinones in the respiratory chain. The immediate electron acceptor for the enzyme in this species is believed to be ubiquinone. Couples the redox reaction to proton translocation (for every two electrons transferred, four hydrogen ions are translocated across the cytoplasmic membrane), and thus conserves the redox energy in a proton gradient. The sequence is that of NADH-quinone oxidoreductase subunit N from Myxococcus xanthus (strain DK1622).